Here is a 315-residue protein sequence, read N- to C-terminus: MSFSSKVKGEICRYIDISKEEALAEISAIMKVSGTLAFSGSGLSFKMTTENPASARLIFTLLKDHFNIHSKLMVKKSNSLKKNNIYMVVISEEMGVRGLLSDTGILKEIDGIMSLDYRIEEYIFKDEDIKRAYIRGAFIGGGSISNPEKTYHLEFVTHSEEYAKDLSNLINTFSLNSKVIQRKNSFIVYIKEGEQIVDLLNVIGAHSSLLEIENIRIMKEMRNNVNRLVNCETANLSKTVNAAVRQVESIKLIQSQIGMQRLPDNLREIAELRLNYPDESLKELGEMLDPPVGKSGINHRLRKIEKIAEELRTSK.

A DNA-binding region (H-T-H motif) is located at residues 280 to 313 (SLKELGEMLDPPVGKSGINHRLRKIEKIAEELRT).

It belongs to the WhiA family.

In terms of biological role, involved in cell division and chromosome segregation. The sequence is that of Probable cell division protein WhiA from Clostridium beijerinckii (strain ATCC 51743 / NCIMB 8052) (Clostridium acetobutylicum).